We begin with the raw amino-acid sequence, 247 residues long: Sortase A (247 aa).

The Cytoplasmic segment spans residues 1-9 (MRNKKKLHG). Residues 10-30 (FFNFVRWLLVVLLIIVGLALV) traverse the membrane as a helical segment. Topologically, residues 31–247 (FNKPIRNAFI…FSKKYNQINL (217 aa)) are extracellular. His140 serves as the catalytic Proton donor/acceptor. Cys206 functions as the Acyl-thioester intermediate in the catalytic mechanism.

The protein belongs to the bacterial sortase family. Class A subfamily.

It is found in the cell membrane. Transpeptidase that anchors surface proteins to the cell wall. Recognizes and modifies its substrate by proteolytic cleavage of a C-terminal sorting signal. Following cleavage, a covalent intermediate is formed via a thioester bond between the sortase and its substrate, which is then transferred and covalently attached to the cell wall. This sortase recognizes a Leu-Pro-x-Thr-Gly (LPXTG) motif, which is cleaved by the sortase between the threonine and glycine residues. Essential for adherence to eukaryotic cells and for binding to fibronectin and fibrinogen. The sequence is that of Sortase A from Streptococcus agalactiae serotype III (strain NEM316).